A 734-amino-acid chain; its full sequence is Cleavage stimulation factor subunit 77 (734 aa).

HAT repeat units lie at residues 20–52, 54–85, 93–128, 139–172, 198–237, 246–278, 280–312, 314–345, 347–379, 382–414, 416–450, and 474–505; these read SPIAQATPIYEQLLSLYPTSARFWKQYVEAQMA, NNDDATKQIFSRCLLTCLQVPLWQCYIRFIRK, EGQEETTKAFEFMLNYIGTDIASGPIWTEYIAFLKS, HRKTALRKVYHRAILTPTHHVEQLWKDYENFENT, ERKKYIEEIDWNMLAVPPTGTSKEETQWVAWKKFLSFEKG, SSTKRIIYAYEQCLMCLYHYPDVWYDYAEWHVK, GSTDAAIKVFQRALKAIPDSEMLKYAFAEMEES, GAIQSAKKLYENILGASTNSLAHIQYLRFLRR, EGVEAARKYFLDARKSPSCTYHVYIAFATMAFC, KEPKVAHNIFEEGLKLYMSEPVYILKYADFLTR, NDDRNIRALFERALSTLPVEDSAEVWKRFIQFEQT, and EGSSPPESSLQDVVSRYSYMDLWPCTSNDLDH. The interval 637 to 734 is disordered; the sequence is VKQSFAAKGN…FSGELSGSTG (98 aa). Positions 664–677 are enriched in basic and acidic residues; sequence LPRDRRATKRKDSD. Residues 709 to 734 show a composition bias toward polar residues; it reads ATSSQTPTGSTSYGSAFSGELSGSTG.

Homodimer. Belongs to the CSTF complex. Forms a complex with cleavage and polyadenylation specificity factor (CPSF) subunits CPSF30, CSTF64, PCFS1, PCFS5 and FIPS5.

The protein resides in the nucleus. One of the multiple factors required for polyadenylation and 3'-end cleavage of pre-mRNAs. Required for the targeted 3' processing of antisense transcripts that triggers transcriptional silencing of the corresponding sense gene. The protein is Cleavage stimulation factor subunit 77 of Arabidopsis thaliana (Mouse-ear cress).